A 66-amino-acid chain; its full sequence is Large ribosomal subunit protein bL33c (66 aa).

This sequence belongs to the bacterial ribosomal protein bL33 family.

The protein resides in the plastid. It is found in the chloroplast. The sequence is that of Large ribosomal subunit protein bL33c from Solanum bulbocastanum (Wild potato).